A 1072-amino-acid polypeptide reads, in one-letter code: Dyslexia-associated protein KIAA0319 (1072 aa).

A signal peptide spans 1-20 (MAPPTGVLSSLLLLVTIAGC). The MANSC domain maps to 21–99 (ARKQCSEGRT…PKKMGPIRSY (79 aa)). Topologically, residues 21 to 955 (ARKQCSEGRT…WDGESNCEWS (935 aa)) are extracellular. Disordered stretches follow at residues 168 to 277 (LQPS…SLPP) and 295 to 327 (VTPG…SPTT). N-linked (GlcNAc...) asparagine glycans are attached at residues asparagine 196, asparagine 219, and asparagine 262. The span at 254–265 (SQLQEQSSNSSG) shows a compositional bias: polar residues. Positions 311-320 (AAPSESTPSE) are enriched in low complexity. 5 consecutive PKD domains span residues 341 to 427 (DNLI…VKPA), 435 to 524 (VAVV…VNNA), 530 to 620 (VANA…VQPE), 621 to 714 (NNRP…VKKE), and 720 to 811 (RARA…VQPD). N-linked (GlcNAc...) asparagine glycosylation is found at asparagine 394, asparagine 421, asparagine 498, asparagine 513, asparagine 536, and asparagine 551. A glycan (N-linked (GlcNAc...) asparagine) is linked at asparagine 733. Residues 956–976 (IFYVTVLAFTLIVLTGGFTWL) form a helical membrane-spanning segment. At 977–1072 (CICCCKRQKR…ASFSYCSKDR (96 aa)) the chain is on the cytoplasmic side. The short motif at 995–998 (YTIL) is the Endocytosis signal element. A disordered region spans residues 1045–1072 (KMERGNPKVSMNGSIRNGASFSYCSKDR). The segment covering 1053–1072 (VSMNGSIRNGASFSYCSKDR) has biased composition (polar residues).

In terms of assembly, homodimer. Interacts with AP2M1; required for clathrin-mediated endocytosis. Post-translationally, N-glycosylated. In terms of processing, O-glycosylated. Shedding of the extracellular domain and intramembrane cleavage produce several proteolytic products. The intramembrane cleavage releases a soluble cytoplasmic polypeptide that translocates to the nucleolus. In terms of tissue distribution, detected in adult brain cortex and fetal frontal lobe (at protein level). Highly expressed in brain cortex, putamen, amygdala, hippocampus and cerebellum.

It is found in the cell membrane. The protein resides in the early endosome membrane. Involved in neuronal migration during development of the cerebral neocortex. May function in a cell autonomous and a non-cell autonomous manner and play a role in appropriate adhesion between migrating neurons and radial glial fibers. May also regulate growth and differentiation of dendrites. This chain is Dyslexia-associated protein KIAA0319 (KIAA0319), found in Homo sapiens (Human).